A 113-amino-acid polypeptide reads, in one-letter code: U11-theraphotoxin-Hhn1a (113 aa).

The first 21 residues, 1–21, serve as a signal peptide directing secretion; that stretch reads MNTVRVTFLLVFVLAVSLGQA. A propeptide spanning residues 22 to 74 is cleaved from the precursor; that stretch reads DKDENRMEMQEKTEQGKSYLDFAENLLLQKLEELEAKLLEEDSEESRNSRQRR. The disordered stretch occupies residues 61-83; the sequence is EEDSEESRNSRQRRCIGEGVPCD. Cystine bridges form between C75–C90, C82–C95, and C89–C110.

The protein belongs to the neurotoxin 14 (magi-1) family. 01 (HNTX-16) subfamily. As to expression, expressed by the venom gland.

It localises to the secreted. Its function is as follows. Probable ion channel inhibitor. The chain is U11-theraphotoxin-Hhn1a from Cyriopagopus hainanus (Chinese bird spider).